We begin with the raw amino-acid sequence, 262 residues long: Taurine import ATP-binding protein TauB (262 aa).

The ABC transporter domain maps to 4 to 233 (LELERISAQY…RYAAGESARA (230 aa)). Position 38 to 45 (38 to 45 (GPSGSGKT)) interacts with ATP.

Belongs to the ABC transporter superfamily. Taurine importer (TC 3.A.1.17.1) family. In terms of assembly, the complex is composed of two ATP-binding proteins (TauB), two transmembrane proteins (TauC) and a solute-binding protein (TauA).

It is found in the cell inner membrane. The catalysed reaction is taurine(out) + ATP + H2O = taurine(in) + ADP + phosphate + H(+). Its function is as follows. Part of the ABC transporter complex TauABC involved in taurine import. Responsible for energy coupling to the transport system. This Pseudomonas putida (strain ATCC 47054 / DSM 6125 / CFBP 8728 / NCIMB 11950 / KT2440) protein is Taurine import ATP-binding protein TauB.